The following is a 359-amino-acid chain: Non-functional pseudokinase ZRK2 (359 aa).

A compositionally biased stretch (basic residues) spans 1–10; that stretch reads MKSMVKKLKQ. A disordered region spans residues 1–20; the sequence is MKSMVKKLKQSLRSGSLEKR. Positions 64–356 constitute a Protein kinase domain; that stretch reads LKATSNFGSS…KELKQIETLF (293 aa). ATP contacts are provided by residues 70–78 and Lys-97; that span reads FGSSCFVTA.

This sequence belongs to the protein kinase superfamily. Ser/Thr protein kinase family. ZRK subfamily.

This Arabidopsis thaliana (Mouse-ear cress) protein is Non-functional pseudokinase ZRK2.